A 465-amino-acid polypeptide reads, in one-letter code: Kynurenine 3-monooxygenase (465 aa).

The disordered stretch occupies residues 1–26 (MSPGIVSQEVNGRQEPTEAARDERHG). Over residues 15–25 (EPTEAARDERH) the composition is skewed to basic and acidic residues. The next 2 membrane-spanning stretches (helical) occupy residues 405–427 (LLFR…SMPY) and 440–462 (LLKR…IYAQ).

Belongs to the aromatic-ring hydroxylase family. KMO subfamily. FAD serves as cofactor.

Its subcellular location is the mitochondrion. The protein resides in the membrane. The enzyme catalyses L-kynurenine + NADPH + O2 + H(+) = 3-hydroxy-L-kynurenine + NADP(+) + H2O. The protein operates within cofactor biosynthesis; NAD(+) biosynthesis; quinolinate from L-kynurenine: step 1/3. Its function is as follows. Catalyzes the hydroxylation of L-kynurenine (L-Kyn) to form 3-hydroxy-L-kynurenine (L-3OHKyn). Required for synthesis of quinolinic acid. The polypeptide is Kynurenine 3-monooxygenase (Drosophila melanogaster (Fruit fly)).